The primary structure comprises 446 residues: Tubulin beta-6 chain (446 aa).

Gln11, Glu69, Ser138, Gly142, Thr143, Gly144, Asn204, and Asn226 together coordinate GTP. Residue Glu69 participates in Mg(2+) binding. The disordered stretch occupies residues 426–446 (QDATADEEEYEDEEEVQADDM). Over residues 429 to 446 (TADEEEYEDEEEVQADDM) the composition is skewed to acidic residues.

Belongs to the tubulin family. As to quaternary structure, dimer of alpha and beta chains. A typical microtubule is a hollow water-filled tube with an outer diameter of 25 nm and an inner diameter of 15 nM. Alpha-beta heterodimers associate head-to-tail to form protofilaments running lengthwise along the microtubule wall with the beta-tubulin subunit facing the microtubule plus end conferring a structural polarity. Microtubules usually have 13 protofilaments but different protofilament numbers can be found in some organisms and specialized cells. Mg(2+) serves as cofactor.

It is found in the cytoplasm. The protein localises to the cytoskeleton. Tubulin is the major constituent of microtubules, a cylinder consisting of laterally associated linear protofilaments composed of alpha- and beta-tubulin heterodimers. Microtubules grow by the addition of GTP-tubulin dimers to the microtubule end, where a stabilizing cap forms. Below the cap, tubulin dimers are in GDP-bound state, owing to GTPase activity of alpha-tubulin. This chain is Tubulin beta-6 chain (TUBB6), found in Zea mays (Maize).